Here is a 51-residue protein sequence, read N- to C-terminus: Large ribosomal subunit protein eL39 (51 aa).

Over residues 1–15 the composition is skewed to basic residues; that stretch reads MAAKKSFKIKQKLAK. Residues 1–21 are disordered; sequence MAAKKSFKIKQKLAKAKNQNR.

Belongs to the eukaryotic ribosomal protein eL39 family. As to quaternary structure, interacts with YIH1.

The protein is Large ribosomal subunit protein eL39 (RPL39) of Eremothecium gossypii (strain ATCC 10895 / CBS 109.51 / FGSC 9923 / NRRL Y-1056) (Yeast).